We begin with the raw amino-acid sequence, 500 residues long: Neuronal acetylcholine receptor subunit beta-2 (500 aa).

A signal peptide spans 1–24; sequence MAGHSNSMALFSFSLLWLCSGVLG. At 25–237 the chain is on the extracellular side; sequence TDTEERLVEH…IIRRKPLFYT (213 aa). 2 N-linked (GlcNAc...) asparagine glycosylation sites follow: N50 and N167. C154 and C168 are joined by a disulfide. A helical transmembrane segment spans residues 238–258; it reads INLIIPCVLITSLAILVFYLP. The Cytoplasmic segment spans residues 259-266; it reads SDCGEKMT. A helical membrane pass occupies residues 267 to 287; it reads LCISVLLALTVFLLLISKIVP. Topologically, residues 288–299 are extracellular; the sequence is PTSLDVPLVGKY. Residues 300-320 traverse the membrane as a helical segment; sequence LMFTMVLVTFSIVTSVCVLNV. Topologically, residues 321–458 are cytoplasmic; sequence HHRSPTTHTM…WKYVAMVIDR (138 aa). A helical membrane pass occupies residues 459–479; the sequence is LFLWIFVFVCVFGTVGMFLQP.

The protein belongs to the ligand-gated ion channel (TC 1.A.9) family. Acetylcholine receptor (TC 1.A.9.1) subfamily. Beta-2/CHRNB2 sub-subfamily. In terms of assembly, neuronal AChR is a heteropentamer composed of two different types of subunits: alpha and beta. CHRNB2/Beta-2 subunit can be combined to CHRNA2/alpha-2, CHRNA3/alpha-3 or CHRNA4/alpha-4, CHRNA5/alpha-5, CHRNA6/alpha-6 and CHRNB3/beta-3 to give rise to functional receptors. CHRNA2:CHRNB2 and CHRNA4:CHRNB2 nAChR complexes exist in two subtypes: LS (low agonist sensitivity) with a (CHRNA2/4)3:(CHRNB2)2 and HS (high agonist sensitivity) with a (CHRNA2/4)2:(CHRNB2)3 stoichiometry; the subtypes differ in their subunit binding interfaces which are involved in ligand binding. Cells produce predominantly an (CHRNA4)3:(CHRNB2)2 nAChR. The stoichiometric form (CHRNA4)2:(CHRNB2)3 expression is selectively up-regulated by nicotine and has lower single channel conductance and calcium permeability. Also part of the stoichiometric forms: (CHRNA4:CHRNB2)2:CHRNB3 or (CHRNA6:CHRNB2)2:CHRNB3. Can form heteropentamers with CHRNA7, mainly found in basal forebrain cholinergic neurons. Interacts with RIC3; which is required for proper folding and assembly. Interacts with LYPD6. In terms of tissue distribution, expressed in most regions of the CNS.

It localises to the synaptic cell membrane. Its subcellular location is the cell membrane. The catalysed reaction is Ca(2+)(in) = Ca(2+)(out). The enzyme catalyses K(+)(in) = K(+)(out). It catalyses the reaction Na(+)(in) = Na(+)(out). Its activity is regulated as follows. Activated by a myriad of ligands such as acetylcholine, cytisine, nicotine, choline and epibatidine. Channel potentiation by calcium is stoichiometry-selective, CHRNA4:CHRNB2 nACh receptor is achieved by calcium association with topographically distinct sites framed by anionic residues within the CHRNA4 subunit and between the CHRNA4 and CHRNB2 subunits. Oligomeric amyloid-beta protein 42 activates specifially CHRNA7:CHRNB2 nAchRs. nAChR activity is inhibited by the antagonist alpha-conotoxins BuIA, PnIA, PnIC, GID and MII, small disulfide-constrained peptides from cone snails. In terms of biological role, component of neuronal acetylcholine receptors (nAChRs) that function as pentameric, ligand-gated cation channels with high calcium permeability among other activities. nAChRs are excitatory neurotrasnmitter receptors formed by a collection of nAChR subunits known to mediate synaptic transmission in the nervous system and the neuromuscular junction. Each nAchR subunit confers differential attributes to channel properties, including activation, deactivation and desensitization kinetics, pH sensitivity, cation permeability, and binding to allosteric modulators. CHRNB2 forms heteropentameric neuronal acetylcholine receptors with CHRNA2, CHRNA3, CHRNA4 and CHRNA6, as well as CHRNA5 and CHRNB3 as accesory subunits. Found in two major stoichiometric forms,(CHRNA4)3:(CHRNB2)2 and (CHRNA4)2:(CHRNB2)3, the two stoichiometric forms differ in their unitary conductance, calcium permeability, ACh sensitivity and potentiation by divalent cation. Heteropentameric channels with CHRNA6 and CHRNA4 exhibit high sensitivity to ACh and nicotine and are predominantly expressed in only a few brain areas, including dopaminergic neurons, norepirephrine neurons and cells of the visual system. nAChrs containing CHRNA6 subunits mediate endogenous cholinergic modulation of dopamine and gamma-aminobutyric acid (GABA) release in response to nicotine at nerve terminals. Also forms functional nAChRs with other subunits such as CHRNA7:CHRNB2, mainly expressed in basal forebrain cholinergic neurons. The chain is Neuronal acetylcholine receptor subunit beta-2 (Chrnb2) from Rattus norvegicus (Rat).